The primary structure comprises 206 residues: Holliday junction branch migration complex subunit RuvA (206 aa).

Residues 1–68 (MITFVRGMLA…EDAMQLFGFL (68 aa)) are domain I. Positions 69–147 (EPGERELFGQ…KWREESGLSA (79 aa)) are domain II. The interval 147–151 (AMGAR) is flexible linker. Residues 152–206 (ASSRVYEEVELALLALGFAPGEVVRALDAVAPAMAGEEQTEAWLRAAIAWLSEQG) are domain III.

The protein belongs to the RuvA family. In terms of assembly, homotetramer. Forms an RuvA(8)-RuvB(12)-Holliday junction (HJ) complex. HJ DNA is sandwiched between 2 RuvA tetramers; dsDNA enters through RuvA and exits via RuvB. An RuvB hexamer assembles on each DNA strand where it exits the tetramer. Each RuvB hexamer is contacted by two RuvA subunits (via domain III) on 2 adjacent RuvB subunits; this complex drives branch migration. In the full resolvosome a probable DNA-RuvA(4)-RuvB(12)-RuvC(2) complex forms which resolves the HJ.

It is found in the cytoplasm. The RuvA-RuvB-RuvC complex processes Holliday junction (HJ) DNA during genetic recombination and DNA repair, while the RuvA-RuvB complex plays an important role in the rescue of blocked DNA replication forks via replication fork reversal (RFR). RuvA specifically binds to HJ cruciform DNA, conferring on it an open structure. The RuvB hexamer acts as an ATP-dependent pump, pulling dsDNA into and through the RuvAB complex. HJ branch migration allows RuvC to scan DNA until it finds its consensus sequence, where it cleaves and resolves the cruciform DNA. The protein is Holliday junction branch migration complex subunit RuvA of Gloeobacter violaceus (strain ATCC 29082 / PCC 7421).